The following is a 655-amino-acid chain: Acetyl-coenzyme A synthetase (655 aa).

CoA-binding positions include 196 to 199 (RGGR) and T316. Residues 392–394 (GEP), 416–421 (DTWWQT), D508, and R523 each bind ATP. Position 531 (S531) interacts with CoA. R534 contributes to the ATP binding site. 3 residues coordinate Mg(2+): V545, H547, and V550. N6-acetyllysine is present on K620.

The protein belongs to the ATP-dependent AMP-binding enzyme family. It depends on Mg(2+) as a cofactor. In terms of processing, acetylated. Deacetylation by the SIR2-homolog deacetylase activates the enzyme.

It catalyses the reaction acetate + ATP + CoA = acetyl-CoA + AMP + diphosphate. In terms of biological role, catalyzes the conversion of acetate into acetyl-CoA (AcCoA), an essential intermediate at the junction of anabolic and catabolic pathways. AcsA undergoes a two-step reaction. In the first half reaction, AcsA combines acetate with ATP to form acetyl-adenylate (AcAMP) intermediate. In the second half reaction, it can then transfer the acetyl group from AcAMP to the sulfhydryl group of CoA, forming the product AcCoA. This chain is Acetyl-coenzyme A synthetase, found in Nitrosomonas europaea (strain ATCC 19718 / CIP 103999 / KCTC 2705 / NBRC 14298).